Here is a 71-residue protein sequence, read N- to C-terminus: Translation initiation factor IF-1 (71 aa).

The S1-like domain maps to 1-71 (MAKDAIKLRA…TKGRITYRHK (71 aa)).

The protein belongs to the IF-1 family. Component of the 30S ribosomal translation pre-initiation complex which assembles on the 30S ribosome in the order IF-2 and IF-3, IF-1 and N-formylmethionyl-tRNA(fMet); mRNA recruitment can occur at any time during PIC assembly.

It is found in the cytoplasm. Its function is as follows. One of the essential components for the initiation of protein synthesis. Stabilizes the binding of IF-2 and IF-3 on the 30S subunit to which N-formylmethionyl-tRNA(fMet) subsequently binds. Helps modulate mRNA selection, yielding the 30S pre-initiation complex (PIC). Upon addition of the 50S ribosomal subunit IF-1, IF-2 and IF-3 are released leaving the mature 70S translation initiation complex. This Mycoplasmopsis synoviae (strain 53) (Mycoplasma synoviae) protein is Translation initiation factor IF-1.